A 214-amino-acid chain; its full sequence is Large ribosomal subunit protein uL3 (214 aa).

The tract at residues 131–153 (KSQRASHGNSRSHNVPGSIGMAQ) is disordered. The segment covering 132–145 (SQRASHGNSRSHNV) has biased composition (polar residues). N5-methylglutamine is present on Gln153.

Belongs to the universal ribosomal protein uL3 family. In terms of assembly, part of the 50S ribosomal subunit. Forms a cluster with proteins L14 and L19. Post-translationally, methylated by PrmB.

One of the primary rRNA binding proteins, it binds directly near the 3'-end of the 23S rRNA, where it nucleates assembly of the 50S subunit. In Thiobacillus denitrificans (strain ATCC 25259 / T1), this protein is Large ribosomal subunit protein uL3.